Consider the following 270-residue polypeptide: Putative phosphoenolpyruvate synthase regulatory protein (270 aa).

Position 150 to 157 (150 to 157) interacts with ADP; that stretch reads GVSRCGKT.

Belongs to the pyruvate, phosphate/water dikinase regulatory protein family. PSRP subfamily.

It carries out the reaction [pyruvate, water dikinase] + ADP = [pyruvate, water dikinase]-phosphate + AMP + H(+). The catalysed reaction is [pyruvate, water dikinase]-phosphate + phosphate + H(+) = [pyruvate, water dikinase] + diphosphate. In terms of biological role, bifunctional serine/threonine kinase and phosphorylase involved in the regulation of the phosphoenolpyruvate synthase (PEPS) by catalyzing its phosphorylation/dephosphorylation. This is Putative phosphoenolpyruvate synthase regulatory protein from Shewanella sediminis (strain HAW-EB3).